Reading from the N-terminus, the 409-residue chain is Autotransproter heptosyltransferase BAHTCr (409 aa).

ADP-D-glycero-beta-D-manno-heptose is bound by residues Thr107, Leu108, and Gly109. Residue Asp110 is the Proton acceptor of the active site. 6 residues coordinate ADP-D-glycero-beta-D-manno-heptose: Gln224, Thr226, Lys230, Arg257, Gly302, and Glu326. Positions 339, 342, 358, and 370 each coordinate Fe(3+).

The protein belongs to the glycosyltransferase 9 family. In terms of assembly, homododecamer composed of 6 homodimers forming a ring. Fe(3+) is required as a cofactor.

It is found in the cytoplasm. It catalyses the reaction ADP-D-glycero-beta-D-manno-heptose + L-seryl-[protein] = O-(D-glycero-alpha-D-manno-heptosyl)-L-seryl-[protein] + ADP + H(+). The enzyme catalyses ADP-L-glycero-beta-D-manno-heptose + L-seryl-[protein] = O-(L-glycero-alpha-D-manno-heptosyl)-L-seryl-[protein] + ADP + H(+). Functionally, glycosylates autotransporter CARC. By glycosylating CARC, involved in the colonization of the mouse host gastrointestinal tract. The chain is Autotransproter heptosyltransferase BAHTCr from Citrobacter rodentium (strain ICC168) (Citrobacter freundii biotype 4280).